A 189-amino-acid chain; its full sequence is Fine tangled pili major subunit (189 aa).

Belongs to the Dps family. In terms of assembly, hexamer.

Its subcellular location is the fimbrium. May contribute to bacterial adherence, or be involved in the protection of the bacteria, or both. This chain is Fine tangled pili major subunit (ftpA), found in Haemophilus ducreyi (strain 35000HP / ATCC 700724).